The chain runs to 276 residues: Small ribosomal subunit protein uS3 (276 aa).

The KH type-2 domain occupies 39 to 110; sequence IRRETMKFLK…KINIKIKEIK (72 aa).

It belongs to the universal ribosomal protein uS3 family. In terms of assembly, part of the 30S ribosomal subunit. Forms a tight complex with proteins S10 and S14.

Its function is as follows. Binds the lower part of the 30S subunit head. Binds mRNA in the 70S ribosome, positioning it for translation. The sequence is that of Small ribosomal subunit protein uS3 from Borrelia recurrentis (strain A1).